The following is an 87-amino-acid chain: uncharacterized protein (87 aa).

The protein belongs to the YlmC/YmxH family.

This is an uncharacterized protein from Clostridium acetobutylicum (strain ATCC 824 / DSM 792 / JCM 1419 / IAM 19013 / LMG 5710 / NBRC 13948 / NRRL B-527 / VKM B-1787 / 2291 / W).